The chain runs to 850 residues: RPA-related protein RADX (850 aa).

The disordered stretch occupies residues 1 to 31; the sequence is MSGESGQPQPGPSHAGLYLEHPERDQAGVPG. Positions 228 to 331 form a DNA-binding region, OB; it reads WNSRKNFPAL…LISTMEICLN (104 aa). 2 disordered regions span residues 575 to 612 and 632 to 671; these read EAFW…MGSQ and GPSA…GKSR. The span at 590-608 shows a compositional bias: basic and acidic residues; sequence GKEDHCHERGSKRSQDDRP. The span at 643-668 shows a compositional bias: polar residues; it reads PHSSAQMKGSKHNTPSQESSTAYTTG.

The protein resides in the chromosome. Functionally, single-stranded DNA-binding protein recruited to replication forks to maintain genome stability. Prevents fork collapse by antagonizing the accumulation of RAD51 at forks to ensure the proper balance of fork remodeling and protection without interfering with the capacity of cells to complete homologous recombination of double-strand breaks. The protein is RPA-related protein RADX of Mus musculus (Mouse).